A 324-amino-acid polypeptide reads, in one-letter code: N-acetylmuramoyl-L-alanine amidase sle1 (324 aa).

The first 25 residues, 1–25, serve as a signal peptide directing secretion; that stretch reads MQKKYITAIIGTTALSALASTHAQA. LysM domains follow at residues 27–70, 84–127, and 147–190; these read TTHT…VLKV, TVYT…KLKV, and ATYT…KLKV. A Peptidase C51 domain is found at 200–324; that stretch reads SNNTRSNGGY…YQVRNYKFIH (125 aa).

The protein resides in the secreted. It is found in the cell surface. It catalyses the reaction Hydrolyzes the link between N-acetylmuramoyl residues and L-amino acid residues in certain cell-wall glycopeptides.. Peptidoglycan hydrolase involved in the splitting of the septum during cell division. In Staphylococcus epidermidis (strain ATCC 12228 / FDA PCI 1200), this protein is N-acetylmuramoyl-L-alanine amidase sle1 (sle1).